The sequence spans 70 residues: Conotoxin Cl9.1 (70 aa).

A signal peptide spans 1–20; it reads MMGKLGVVLFICLVLFPLET. Positions 21–50 are excised as a propeptide; it reads LQLEGGQQADRHVDQLEGNPNRETRTIEVR. Intrachain disulfides connect Cys-51–Cys-63, Cys-56–Cys-67, and Cys-61–Cys-70.

It belongs to the conotoxin M superfamily. As to expression, expressed by the venom duct.

It is found in the secreted. This is Conotoxin Cl9.1 from Californiconus californicus (California cone).